The chain runs to 779 residues: Tricorn protease-interacting factor F3 (779 aa).

Residues Glu102 and Gly231 to Asn235 each bind substrate. Residue His266 participates in Zn(2+) binding. Glu267 (proton acceptor) is an active-site residue. Residues His270 and Glu289 each contribute to the Zn(2+) site.

The protein belongs to the peptidase M1 family. As to quaternary structure, part of the tricorn proteolytic complex. Zn(2+) is required as a cofactor.

It is found in the cytoplasm. Proteases F1, F2 and F3 degrade oligopeptides produced by Tricorn (themselves probably produced by the proteasome), yielding free amino acids. The protein is Tricorn protease-interacting factor F3 (trf3) of Thermoplasma volcanium (strain ATCC 51530 / DSM 4299 / JCM 9571 / NBRC 15438 / GSS1).